Reading from the N-terminus, the 716-residue chain is Inhibitor of nuclear factor kappa-B kinase subunit epsilon (716 aa).

A Protein kinase domain is found at 9-315 (WHTDDLLGQG…LQRVVVHVFS (307 aa)). 15 to 23 (LGQGATASV) contributes to the ATP binding site. Lys30 participates in a covalent cross-link: Glycyl lysine isopeptide (Lys-Gly) (interchain with G-Cter in ubiquitin). Lys38 contacts ATP. Asp135 (proton acceptor) is an active-site residue. A Phosphoserine; by autocatalysis and IKKB modification is found at Ser172. Lys231 participates in a covalent cross-link: Glycyl lysine isopeptide (Lys-Gly) (interchain with G-Cter in SUMO1). Residues 383 to 647 (STAIPKGLAF…VQESLSKLLE (265 aa)) are interaction with DDX3X. Residue Lys401 forms a Glycyl lysine isopeptide (Lys-Gly) (interchain with G-Cter in ubiquitin) linkage. Residues 436–457 (QELMFRGLHWVMEVLQATCRRT) form a leucine-zipper region. Thr501 bears the Phosphothreonine mark. Phosphoserine is present on Ser664.

Belongs to the protein kinase superfamily. Ser/Thr protein kinase family. I-kappa-B kinase subfamily. Homodimer. Interacts with MAVS/IPS1. Interacts (via protein kinase domain) with TTLL12 (via N-terminus); the interaction prevents MAVS binding to IKBKE. Interacts with the adapter proteins AZI2/NAP1, TANK and TBKBP1/SINTBAD. Interacts with SIKE1. Interacts with TICAM1/TRIF, IRF3 and RIGI; interactions are disrupted by the interaction between IKBKE and SIKE1. Interacts with TOPORS; induced by DNA damage. Interacts with CYLD. Interacts (when polyubiquitinated) with IKBKB, IKBKG and MYD88. Interacts with IFIH1. Interacts with DDX3X; the interaction may be induced upon virus infection. Interacts with TRIM6 (via SPRY box). Interacts with unanchored K48-linked polyubiquitin chains; this leads to IKBKE activation. Interacts with TBK1. Interacts with FKBP5. As to quaternary structure, (Microbial infection) Interacts (via Protein kinase domain) with arenavirus protein N; the interaction inhibits IKBKE kinase function. In terms of assembly, (Microbial infection) Interacts with Ebola virus protein VP35; the interaction leads to inhibition of cellular antiviral response by blocking necessary interactions between the IKBKE and MAVS/IPS as well as its substrates IRF3 and IRF7. (Microbial infection) Interacts with Severe fever with thrombocytopenia virus (SFTSV) NSs; this interaction this interaction sequesters IKBKE in NSs-induced cytoplasmic inclusion bodies thereby inhibiting the IFN responses. As to quaternary structure, (Microbial infection) Interacts with human T-cell leukemia virus 1/HTLV-1 protein HBZ. In terms of assembly, (Microbial infection) Interacts with Epstein-Barr virus (EBV) protein NEC2/BFRF1; this interaction inhibits IKBKE kinase activity and IRF3 nuclear translocation. Autophosphorylated and phosphorylated by IKBKB/IKKB. Phosphorylation at Ser-172 is enhanced by the interaction with DDX3X. Phosphorylated at Thr-501 upon IFN activation. Post-translationally, sumoylation by TOPORS upon DNA damage is required for protection of cells against DNA damage-induced cell death. Desumoylated by SENP1. In terms of processing, 'Lys-63'-linked polyubiquitinated at Lys-30 and Lys-401 by TRAF2:BIRC2 and TRAF2:BIRC3 complexes. Ubiquitination is induced by LPS, TNFA and interleukin-1 and required for full kinase activity and KF-kappa-B pathway activation. In terms of tissue distribution, highly expressed in spleen followed by thymus, peripheral blood leukocytes, pancreas, placenta. Weakly expressed in lung, kidney, prostate, ovary and colon.

The protein localises to the cytoplasm. Its subcellular location is the nucleus. The protein resides in the PML body. It carries out the reaction L-seryl-[I-kappa-B protein] + ATP = O-phospho-L-seryl-[I-kappa-B protein] + ADP + H(+). In terms of biological role, serine/threonine kinase that plays an essential role in regulating inflammatory responses to viral infection, through the activation of the type I IFN, NF-kappa-B and STAT signaling. Also involved in TNFA and inflammatory cytokines, like Interleukin-1, signaling. Following activation of viral RNA sensors, such as RIG-I-like receptors, associates with DDX3X and phosphorylates interferon regulatory factors (IRFs), IRF3 and IRF7, as well as DDX3X. This activity allows subsequent homodimerization and nuclear translocation of the IRF3 leading to transcriptional activation of pro-inflammatory and antiviral genes including IFNB. In order to establish such an antiviral state, IKBKE forms several different complexes whose composition depends on the type of cell and cellular stimuli. Thus, several scaffolding molecules including IPS1/MAVS, TANK, AZI2/NAP1 or TBKBP1/SINTBAD can be recruited to the IKBKE-containing-complexes. Activated by polyubiquitination in response to TNFA and interleukin-1, regulates the NF-kappa-B signaling pathway through, at least, the phosphorylation of CYLD. Phosphorylates inhibitors of NF-kappa-B thus leading to the dissociation of the inhibitor/NF-kappa-B complex and ultimately the degradation of the inhibitor. In addition, is also required for the induction of a subset of ISGs which displays antiviral activity, may be through the phosphorylation of STAT1 at 'Ser-708'. Phosphorylation of STAT1 at 'Ser-708' also seems to promote the assembly and DNA binding of ISGF3 (STAT1:STAT2:IRF9) complexes compared to GAF (STAT1:STAT1) complexes, in this way regulating the balance between type I and type II IFN responses. Protects cells against DNA damage-induced cell death. Also plays an important role in energy balance regulation by sustaining a state of chronic, low-grade inflammation in obesity, wich leads to a negative impact on insulin sensitivity. Phosphorylates AKT1. The chain is Inhibitor of nuclear factor kappa-B kinase subunit epsilon (IKBKE) from Homo sapiens (Human).